Here is a 465-residue protein sequence, read N- to C-terminus: Ribulose bisphosphate carboxylase large chain (465 aa).

Lysine 4 bears the N6,N6,N6-trimethyllysine mark. Substrate contacts are provided by asparagine 113 and threonine 163. Lysine 165 functions as the Proton acceptor in the catalytic mechanism. Lysine 167 contacts substrate. 3 residues coordinate Mg(2+): lysine 191, aspartate 193, and glutamate 194. Lysine 191 bears the N6-carboxylysine mark. Catalysis depends on histidine 284, which acts as the Proton acceptor. Substrate contacts are provided by arginine 285, histidine 317, and serine 369.

It belongs to the RuBisCO large chain family. Type I subfamily. Heterohexadecamer of 8 large chains and 8 small chains; disulfide-linked. The disulfide link is formed within the large subunit homodimers. The cofactor is Mg(2+). Post-translationally, the disulfide bond which can form in the large chain dimeric partners within the hexadecamer appears to be associated with oxidative stress and protein turnover.

Its subcellular location is the plastid. The protein localises to the chloroplast. It carries out the reaction 2 (2R)-3-phosphoglycerate + 2 H(+) = D-ribulose 1,5-bisphosphate + CO2 + H2O. It catalyses the reaction D-ribulose 1,5-bisphosphate + O2 = 2-phosphoglycolate + (2R)-3-phosphoglycerate + 2 H(+). Functionally, ruBisCO catalyzes two reactions: the carboxylation of D-ribulose 1,5-bisphosphate, the primary event in carbon dioxide fixation, as well as the oxidative fragmentation of the pentose substrate in the photorespiration process. Both reactions occur simultaneously and in competition at the same active site. The polypeptide is Ribulose bisphosphate carboxylase large chain (Fragaria ananassa (Strawberry)).